Consider the following 81-residue polypeptide: Exodeoxyribonuclease 7 small subunit (81 aa).

The protein belongs to the XseB family. In terms of assembly, heterooligomer composed of large and small subunits.

Its subcellular location is the cytoplasm. It carries out the reaction Exonucleolytic cleavage in either 5'- to 3'- or 3'- to 5'-direction to yield nucleoside 5'-phosphates.. Its function is as follows. Bidirectionally degrades single-stranded DNA into large acid-insoluble oligonucleotides, which are then degraded further into small acid-soluble oligonucleotides. The polypeptide is Exodeoxyribonuclease 7 small subunit (Ruegeria sp. (strain TM1040) (Silicibacter sp.)).